The following is a 258-amino-acid chain: 5'-nucleotidase SurE (258 aa).

A divalent metal cation-binding residues include aspartate 10, aspartate 11, serine 41, and asparagine 96.

Belongs to the SurE nucleotidase family. A divalent metal cation serves as cofactor.

Its subcellular location is the cytoplasm. It carries out the reaction a ribonucleoside 5'-phosphate + H2O = a ribonucleoside + phosphate. Functionally, nucleotidase that shows phosphatase activity on nucleoside 5'-monophosphates. This Sorangium cellulosum (strain So ce56) (Polyangium cellulosum (strain So ce56)) protein is 5'-nucleotidase SurE.